A 450-amino-acid polypeptide reads, in one-letter code: tRNA modification GTPase MnmE (450 aa).

Residues R26, E84, and K123 each coordinate (6S)-5-formyl-5,6,7,8-tetrahydrofolate. Residues 219-376 (GMHVVLVGQP…LKAKLLEMIG (158 aa)) form the TrmE-type G domain. N229 provides a ligand contact to K(+). GTP-binding positions include 229 to 234 (NVGKSS), 248 to 254 (TDIAGTT), 273 to 276 (DTAG), and 357 to 359 (SAR). S233 contacts Mg(2+). Residues T248, I250, and T253 each contribute to the K(+) site. A Mg(2+)-binding site is contributed by T254. A (6S)-5-formyl-5,6,7,8-tetrahydrofolate-binding site is contributed by K450.

Belongs to the TRAFAC class TrmE-Era-EngA-EngB-Septin-like GTPase superfamily. TrmE GTPase family. Homodimer. Heterotetramer of two MnmE and two MnmG subunits. It depends on K(+) as a cofactor.

Its subcellular location is the cytoplasm. In terms of biological role, exhibits a very high intrinsic GTPase hydrolysis rate. Involved in the addition of a carboxymethylaminomethyl (cmnm) group at the wobble position (U34) of certain tRNAs, forming tRNA-cmnm(5)s(2)U34. This chain is tRNA modification GTPase MnmE, found in Chromobacterium violaceum (strain ATCC 12472 / DSM 30191 / JCM 1249 / CCUG 213 / NBRC 12614 / NCIMB 9131 / NCTC 9757 / MK).